The following is a 428-amino-acid chain: 3-phosphoshikimate 1-carboxyvinyltransferase (428 aa).

The 3-phosphoshikimate site is built by Lys-20, Ser-21, and Arg-25. Lys-20 contributes to the phosphoenolpyruvate binding site. Residues Gly-92 and Arg-120 each contribute to the phosphoenolpyruvate site. 4 residues coordinate 3-phosphoshikimate: Ser-166, Gln-168, Asp-314, and Lys-341. Gln-168 is a phosphoenolpyruvate binding site. Asp-314 functions as the Proton acceptor in the catalytic mechanism. Residues Arg-345 and Arg-387 each contribute to the phosphoenolpyruvate site.

It belongs to the EPSP synthase family. In terms of assembly, monomer.

It localises to the cytoplasm. The enzyme catalyses 3-phosphoshikimate + phosphoenolpyruvate = 5-O-(1-carboxyvinyl)-3-phosphoshikimate + phosphate. It participates in metabolic intermediate biosynthesis; chorismate biosynthesis; chorismate from D-erythrose 4-phosphate and phosphoenolpyruvate: step 6/7. Its function is as follows. Catalyzes the transfer of the enolpyruvyl moiety of phosphoenolpyruvate (PEP) to the 5-hydroxyl of shikimate-3-phosphate (S3P) to produce enolpyruvyl shikimate-3-phosphate and inorganic phosphate. The sequence is that of 3-phosphoshikimate 1-carboxyvinyltransferase from Listeria monocytogenes serotype 4a (strain HCC23).